The primary structure comprises 224 residues: 3-dehydroquinate dehydratase (224 aa).

Residues 30–32 and R62 each bind 3-dehydroquinate; that span reads EWR. The Proton donor/acceptor role is filled by H118. The active-site Schiff-base intermediate with substrate is the K143. 3-dehydroquinate-binding residues include R186, S205, and Q209.

Belongs to the type-I 3-dehydroquinase family. In terms of assembly, homodimer.

The catalysed reaction is 3-dehydroquinate = 3-dehydroshikimate + H2O. It participates in metabolic intermediate biosynthesis; chorismate biosynthesis; chorismate from D-erythrose 4-phosphate and phosphoenolpyruvate: step 3/7. Involved in the third step of the chorismate pathway, which leads to the biosynthesis of aromatic amino acids. Catalyzes the cis-dehydration of 3-dehydroquinate (DHQ) and introduces the first double bond of the aromatic ring to yield 3-dehydroshikimate. The protein is 3-dehydroquinate dehydratase of Streptococcus suis (strain 98HAH33).